The following is a 228-amino-acid chain: Calcyclin-binding protein (228 aa).

At Ala-2 the chain carries N-acetylalanine. Residues 2-80 form an interaction with SIAH1 region; that stretch reads ASEELQKDLE…YTVKISNYGW (79 aa). Ser-3 carries the phosphoserine modification. Lys-8 and Lys-19 each carry N6-acetyllysine. The residue at position 34 (Ser-34) is a Phosphoserine. The CS domain occupies 73 to 167; sequence VKISNYGWDQ…VENTRWDYLT (95 aa). An interaction with SKP1 region spans residues 73-228; the sequence is VKISNYGWDQ…EKQAKGDTEF (156 aa). Lys-85 and Lys-118 each carry N6-acetyllysine. The interaction with S100A6 stretch occupies residues 154-228; sequence CRKKVENTRW…EKQAKGDTEF (75 aa). The 61-residue stretch at 168–228 folds into the SGS domain; the sequence is QVEKERKEKE…EKQAKGDTEF (61 aa).

In terms of assembly, interacts with protein of the S100 family S100A1, S100A6, S100B, S100P and S100A12 in a calcium-dependent manner. Component of some large E3 complex at least composed of UBE2D1, SIAH1, CACYBP/SIP, SKP1, APC and TBL1X. Interacts directly with SIAH1, SIAH2 and SKP1. Phosphorylated on serine residues. Phosphorylated upon induction by RA or at high calcium concentrations.

Its subcellular location is the cytoplasm. It localises to the nucleus. May be involved in calcium-dependent ubiquitination and subsequent proteasomal degradation of target proteins. Probably serves as a molecular bridge in ubiquitin E3 complexes. Participates in the ubiquitin-mediated degradation of beta-catenin (CTNNB1). This chain is Calcyclin-binding protein (CACYBP), found in Pongo abelii (Sumatran orangutan).